The chain runs to 446 residues: tRNA modification GTPase MnmE (446 aa).

(6S)-5-formyl-5,6,7,8-tetrahydrofolate-binding residues include R24, E81, and K120. Residues 216–368 (GLHAVLIGPP…LHTRLRELAL (153 aa)) form the TrmE-type G domain. K(+) is bound at residue N226. GTP-binding positions include 226–231 (NAGKSS), 245–251 (TDVAGTT), and 270–273 (DTAG). S230 contacts Mg(2+). Positions 245, 247, and 250 each coordinate K(+). T251 contributes to the Mg(2+) binding site. Residue K446 coordinates (6S)-5-formyl-5,6,7,8-tetrahydrofolate.

It belongs to the TRAFAC class TrmE-Era-EngA-EngB-Septin-like GTPase superfamily. TrmE GTPase family. In terms of assembly, homodimer. Heterotetramer of two MnmE and two MnmG subunits. It depends on K(+) as a cofactor.

Its subcellular location is the cytoplasm. Its function is as follows. Exhibits a very high intrinsic GTPase hydrolysis rate. Involved in the addition of a carboxymethylaminomethyl (cmnm) group at the wobble position (U34) of certain tRNAs, forming tRNA-cmnm(5)s(2)U34. This Xanthomonas campestris pv. campestris (strain 8004) protein is tRNA modification GTPase MnmE.